The chain runs to 1481 residues: Cystic fibrosis transmembrane conductance regulator (1481 aa).

Residues 1–77 (MQRSPLEKAS…KLINALRRCF (77 aa)) are Cytoplasmic-facing. Residues 78–98 (FWRFTFYGILLYLGEVTKAVQ) traverse the membrane as a helical segment. The ABC transmembrane type-1 1 domain occupies 81–365 (FTFYGILLYL…WAVQTWYDSL (285 aa)). Residues 99 to 122 (PLLLGRIIASYDPDNKTERSIAIY) are Extracellular-facing. The helical transmembrane segment at 123–146 (LGIGLCLLFIVRTLLLHPAIFGLH) threads the bilayer. Residues 147 to 195 (HIGMQMRIAMFSLIYKKTLKLSSRVLDKISIGQLVSLLSNNLNKFDEGL) lie on the Cytoplasmic side of the membrane. Residues 196–216 (ALAHFVWIAPLQVALLMGLIW) form a helical membrane-spanning segment. At 217–222 (ELLQAS) the chain is on the extracellular side. Residues 223-243 (AFCGLGFLIVLALFQAGLGRM) traverse the membrane as a helical segment. At 244–298 (MMKYRDQRAGKINERLVITSEMIENIQSVKAYCWEEAMEKMIENLRQTELKLTRK) the chain is on the cytoplasmic side. A helical transmembrane segment spans residues 299 to 319 (AAYVRYFNSSAFFFSGFFVVF). The Extracellular portion of the chain corresponds to 320-339 (LSVLPYALIKGIALRKIFTT). The helical transmembrane segment at 340 to 358 (ISFCIVLRMAVTRQFPWAV) threads the bilayer. At 359–858 (QTWYDSLGAI…YLRYITLHKS (500 aa)) the chain is on the cytoplasmic side. Residues tryptophan 401, serine 434, 458–465 (GSTGAGKT), and glutamine 493 each bind ATP. The ABC transporter 1 domain occupies 423–646 (NGDDNLFFSN…RPDFSSKLMG (224 aa)). The S-palmitoyl cysteine moiety is linked to residue cysteine 524. Phosphoserine occurs at positions 549 and 660. Positions 654 to 831 (SSERRNSILT…EEINEEDLKE (178 aa)) are disordered R region. Residue serine 670 is modified to Phosphoserine; by PKA. Serine 686 carries the post-translational modification Phosphoserine. Lysine 688 participates in a covalent cross-link: Glycyl lysine isopeptide (Lys-Gly) (interchain with G-Cter in ubiquitin). Phosphoserine is present on residues serine 700 and serine 712. Threonine 717 carries the phosphothreonine modification. A phosphoserine mark is found at serine 737, serine 753, serine 768, serine 790, serine 795, and serine 813. Residues 859 to 879 (LIFVLIWCLVIFLAEVAASLV) form a helical membrane-spanning segment. An ABC transmembrane type-1 2 domain is found at 859–1155 (LIFVLIWCLV…AVNSSIDVDS (297 aa)). The Extracellular portion of the chain corresponds to 880-918 (LLWLLGNTRFQDKGNSTYSRNNSYAVIITNTSSYYVFYI). N-linked (GlcNAc...) asparagine glycans are attached at residues asparagine 894, asparagine 900, and asparagine 909. Residues 919–939 (YVGVADTLLALGFFRGLPLVH) traverse the membrane as a discontinuously helical segment. The Cytoplasmic segment spans residues 940 to 990 (TLITVSKILHHKMLHSVLQAPMSTLNTLKAGGILNRFSKDIAILDDLLPLT). A helical transmembrane segment spans residues 991 to 1011 (IFDFIQLLLIVIGAIAVVSVL). Over 1012–1013 (QP) the chain is Extracellular. A helical transmembrane segment spans residues 1014–1034 (YIFLATVPVIAAFILLRAYFL). Over 1035-1095 (QTSQQLKQLE…TASWFLYLST (61 aa)) the chain is Cytoplasmic. Residues 1096-1116 (LRWFQMRIEMIFVIFFIAVTF) traverse the membrane as a helical segment. The Extracellular portion of the chain corresponds to 1117-1130 (ISILTTGEGEGTVG). Residues 1131-1151 (IILTLAMNIMSTLQWAVNSSI) form a helical membrane-spanning segment. At 1152–1481 (DVDSLMRSVS…TEEEVQETRL (330 aa)) the chain is on the cytoplasmic side. The ABC transporter 2 domain maps to 1211-1444 (MTIKDLTAKY…KSLFRQAISH (234 aa)). Residues tyrosine 1220 and 1245 to 1252 (GRTGSGKS) contribute to the ATP site. An interaction with GORASP2 region spans residues 1387-1481 (RALKQAFADC…TEEEVQETRL (95 aa)). Cysteine 1396 carries S-palmitoyl cysteine lipidation. Phosphoserine is present on residues serine 1445 and serine 1457. Residues 1453-1481 (HRNSSKYKSRPQIASLKEETEEEVQETRL) form a disordered region. Positions 1471–1481 (ETEEEVQETRL) are enriched in acidic residues. Positions 1479 to 1481 (TRL) match the PDZ-binding motif.

This sequence belongs to the ABC transporter superfamily. ABCC family. CFTR transporter (TC 3.A.1.202) subfamily. In terms of assembly, monomer; does not require oligomerization for channel activity. May form oligomers in the membrane. Interacts with SLC26A3, SLC26A6 and NHERF1. Interacts with SHANK2. Interacts with MYO6. Interacts (via C-terminus) with GOPC (via PDZ domain); this promotes CFTR internalization and thereby decreases channel activity. Interacts with SLC4A7 through NHERF1. Found in a complex with MYO5B and RAB11A. Interacts with ANO1. Interacts with SLC26A8. Interacts with AHCYL1; the interaction increases CFTR activity. Interacts with CSE1L. The core-glycosylated form interacts with GORASP2 (via PDZ GRASP-type 1 domain) in respone to ER stress. Interacts with MARCHF2; the interaction leads to CFTR ubiqtuitination and degradation. Interacts with ADGRG2. N-glycosylated. Post-translationally, phosphorylated; cAMP treatment promotes phosphorylation and activates the channel. Dephosphorylation decreases the ATPase activity (in vitro). Phosphorylation at PKA sites activates the channel. Phosphorylation at PKC sites enhances the response to phosphorylation by PKA. Phosphorylated by AMPK; this inhibits channel activity. In terms of processing, ubiquitinated, leading to its degradation in the lysosome. Deubiquitination by USP10 in early endosomes enhances its endocytic recycling to the cell membrane. Ubiquitinated by RNF185 during ER stress. Ubiquitinated by MARCHF2.

Its subcellular location is the apical cell membrane. It is found in the early endosome membrane. The protein resides in the cell membrane. The protein localises to the recycling endosome membrane. It localises to the endoplasmic reticulum membrane. Its subcellular location is the nucleus. It catalyses the reaction ATP + H2O + closed Cl(-) channel = ADP + phosphate + open Cl(-) channel.. It carries out the reaction chloride(in) = chloride(out). The enzyme catalyses hydrogencarbonate(in) = hydrogencarbonate(out). The catalysed reaction is ATP + H2O = ADP + phosphate + H(+). In terms of biological role, epithelial ion channel that plays an important role in the regulation of epithelial ion and water transport and fluid homeostasis. Mediates the transport of chloride ions across the cell membrane. Possesses an intrinsic ATPase activity and utilizes ATP to gate its channel; the passive flow of anions through the channel is gated by cycles of ATP binding and hydrolysis by the ATP-binding domains. The ion channel is also permeable to HCO(3)(-); selectivity depends on the extracellular chloride concentration. Exerts its function also by modulating the activity of other ion channels and transporters. Contributes to the regulation of the pH and the ion content of the epithelial fluid layer. Modulates the activity of the epithelial sodium channel (ENaC) complex, in part by regulating the cell surface expression of the ENaC complex. May regulate bicarbonate secretion and salvage in epithelial cells by regulating the transporter SLC4A7. Can inhibit the chloride channel activity of ANO1. Plays a role in the chloride and bicarbonate homeostasis during sperm epididymal maturation and capacitation. This is Cystic fibrosis transmembrane conductance regulator from Saimiri boliviensis boliviensis (Bolivian squirrel monkey).